Here is an 832-residue protein sequence, read N- to C-terminus: Putative beta-glucosidase (832 aa).

Residue D225 is part of the active site. The 160-residue stretch at 397-556 folds into the PA14 domain; that stretch reads TGKHGYVAKF…DPETEIDYAV (160 aa).

Belongs to the glycosyl hydrolase 3 family.

The protein localises to the cytoplasm. The catalysed reaction is Hydrolysis of terminal, non-reducing beta-D-glucosyl residues with release of beta-D-glucose.. This Schizosaccharomyces pombe (strain 972 / ATCC 24843) (Fission yeast) protein is Putative beta-glucosidase.